A 507-amino-acid chain; its full sequence is Phytoene dehydrogenase (507 aa).

12–45 (VVVGAGLAGLAAALHLLGAGRRVTVVEREDVPGG) contributes to the FAD binding site.

The protein belongs to the carotenoid/retinoid oxidoreductase family. The cofactor is FAD.

Its pathway is carotenoid biosynthesis; lycopene biosynthesis. Functionally, this enzyme converts phytoene into zeta-carotene via the intermediary of phytofluene by the symmetrical introduction of two double bonds at the C-11 and C-11' positions of phytoene. This chain is Phytoene dehydrogenase (crtI), found in Streptomyces griseus.